The following is a 417-amino-acid chain: Gamma-glutamyl phosphate reductase (417 aa).

Belongs to the gamma-glutamyl phosphate reductase family.

The protein resides in the cytoplasm. The catalysed reaction is L-glutamate 5-semialdehyde + phosphate + NADP(+) = L-glutamyl 5-phosphate + NADPH + H(+). Its pathway is amino-acid biosynthesis; L-proline biosynthesis; L-glutamate 5-semialdehyde from L-glutamate: step 2/2. Catalyzes the NADPH-dependent reduction of L-glutamate 5-phosphate into L-glutamate 5-semialdehyde and phosphate. The product spontaneously undergoes cyclization to form 1-pyrroline-5-carboxylate. In Klebsiella pneumoniae subsp. pneumoniae (strain ATCC 700721 / MGH 78578), this protein is Gamma-glutamyl phosphate reductase.